The sequence spans 427 residues: MGDSGDPFLRNPNAAVQARAKVQNRANVLQLKLMGQSHPTGLTNNLLKLFEPRPPLEYKPPPEKRKCPPYTGMAQFVSNFAEPGDPEYAPPKPEVELPSQKRERIHKLRLEKGVEKAAEDLKKYDPNNDPNATGDPYKTLFVSRLNYESSESKIKREFESYGPIKRVHLVTDQLTNKPKGYAFIEYMHTRDMKAAYKQADGQKIDGRRVLVDVERGRTVPNWRPRRLGGGLGTSRVGGGEEIVGEQQPQGRTSQSEEPSRPREEREKSREKGKERERSRELSHEQPRERSRDRPREDKHHRDRDQGGRDRDRDSRRDRDRTRDRGDRDRRDRDRGRDRTSRDHDRDRSRKKERDYEGGEYEHEGGGRSRERDAEYRGEPEETRGYYEDDQGDTDRYSHRYDKMEEDDFRYEREYKRSKRSESREYVR.

Disordered regions lie at residues 82 to 102 (EPGD…SQKR) and 215 to 427 (RGRT…EYVR). Residues 93-102 (PEVELPSQKR) show a composition bias toward basic and acidic residues. The RRM domain maps to 138 to 216 (KTLFVSRLNY…RRVLVDVERG (79 aa)). Positions 227 to 241 (LGGGLGTSRVGGGEE) are enriched in gly residues. 2 stretches are compositionally biased toward basic and acidic residues: residues 257–402 (EPSR…RYDK) and 409–427 (RYER…EYVR). Residue Ser282 is modified to Phosphoserine.

As to quaternary structure, component of the spliceosome. Interacts with CYP63, U2AF35A, U2AF35B, SRZ21, RSZ22, SR34, SR45, SR45A and SCL33. Phosphorylated. The association and dissociation with SR45 is not affected by the phosphorylation status. In terms of tissue distribution, ubiquitous.

The protein resides in the nucleus speckle. The protein localises to the nucleus. Its subcellular location is the nucleoplasm. Functionally, mediates the splicing of pre-mRNA by binding to the loop I region of U1-snRNA. The polypeptide is U1 small nuclear ribonucleoprotein 70 kDa (RNU1) (Arabidopsis thaliana (Mouse-ear cress)).